Consider the following 70-residue polypeptide: Turripeptide Pal9.2 (70 aa).

The signal sequence occupies residues 1–20; the sequence is MKVYCLLVVLLVGLVSQTQG. A Kazal-like domain is found at 21 to 70; sequence QLDKKCNMACTLDYRPVCGSDGKTYPNRCALTSTACESQQSITVLHDGEC. 3 cysteine pairs are disulfide-bonded: Cys-26–Cys-56, Cys-30–Cys-49, and Cys-38–Cys-70.

Belongs to the conopeptide P-like superfamily. In terms of tissue distribution, expressed by the venom duct.

The protein resides in the secreted. In terms of biological role, acts as a neurotoxin by inhibiting an ion channel. May also act as a serine protease inhibitor, since it possess the kazal serine protease inhibitor signature. In Polystira albida (White giant-turris), this protein is Turripeptide Pal9.2.